Consider the following 149-residue polypeptide: Lymphocyte antigen 6 complex locus protein G5c (149 aa).

A signal peptide spans 1-41 (MLFMAGPAASWSLRPLGLHGVPQALCAVLLTVLVMKTLVLG). Positions 59–149 (LNCYRCLLET…NPDNRKNSMH (91 aa)) constitute a UPAR/Ly6 domain. 5 disulfides stabilise this stretch: cysteine 61-cysteine 88, cysteine 64-cysteine 73, cysteine 80-cysteine 106, cysteine 115-cysteine 132, and cysteine 133-cysteine 138. An N-linked (GlcNAc...) asparagine glycan is attached at asparagine 95.

Forms oligomers. Post-translationally, N-glycosylated. As to expression, detected in adult brain.

The protein resides in the secreted. In terms of biological role, may have a role in hematopoietic cell differentiation. This chain is Lymphocyte antigen 6 complex locus protein G5c (Ly6g5c), found in Mus musculus (Mouse).